A 405-amino-acid polypeptide reads, in one-letter code: Probable tRNA sulfurtransferase (405 aa).

The THUMP domain occupies 60-165 (DKVMGRLKLV…LNGIFLSSET (106 aa)). ATP-binding positions include 183–184 (ML), 208–209 (HF), Arg265, Gly287, and Gln296.

This sequence belongs to the ThiI family.

The protein localises to the cytoplasm. The enzyme catalyses [ThiI sulfur-carrier protein]-S-sulfanyl-L-cysteine + a uridine in tRNA + 2 reduced [2Fe-2S]-[ferredoxin] + ATP + H(+) = [ThiI sulfur-carrier protein]-L-cysteine + a 4-thiouridine in tRNA + 2 oxidized [2Fe-2S]-[ferredoxin] + AMP + diphosphate. It catalyses the reaction [ThiS sulfur-carrier protein]-C-terminal Gly-Gly-AMP + S-sulfanyl-L-cysteinyl-[cysteine desulfurase] + AH2 = [ThiS sulfur-carrier protein]-C-terminal-Gly-aminoethanethioate + L-cysteinyl-[cysteine desulfurase] + A + AMP + 2 H(+). It participates in cofactor biosynthesis; thiamine diphosphate biosynthesis. Functionally, catalyzes the ATP-dependent transfer of a sulfur to tRNA to produce 4-thiouridine in position 8 of tRNAs, which functions as a near-UV photosensor. Also catalyzes the transfer of sulfur to the sulfur carrier protein ThiS, forming ThiS-thiocarboxylate. This is a step in the synthesis of thiazole, in the thiamine biosynthesis pathway. The sulfur is donated as persulfide by IscS. This chain is Probable tRNA sulfurtransferase, found in Lactiplantibacillus plantarum (strain ATCC BAA-793 / NCIMB 8826 / WCFS1) (Lactobacillus plantarum).